The following is a 199-amino-acid chain: MNCVCRLVLVVLSLWPDTAVAPGPPPGPPRVSPDPRAELDSTVLLTRSLLADTRQLAAQLRDKFPADGDHNLDSLPTLAMSAGALGALQLPGVLTRLRADLLSYLRHVQWLRRAGGSSLKTLEPELGTLQARLDRLLRRLQLLMSRLALPQPPPDPPAPPLAPPSSAWGGIRAAHAILGGLHLTLDWAVRGLLLLKTRL.

An N-terminal signal peptide occupies residues 1–21; sequence MNCVCRLVLVVLSLWPDTAVA. The important for interaction with IL11RA and for the stimulation of cell proliferation stretch occupies residues 182–190; sequence HLTLDWAVR.

This sequence belongs to the IL-6 superfamily. As to quaternary structure, interacts with IL11RA to associate with IL6ST, giving rise to a multimeric signaling complex.

It localises to the secreted. Cytokine that stimulates the proliferation of hematopoietic stem cells and megakaryocyte progenitor cells and induces megakaryocyte maturation resulting in increased platelet production. Also promotes the proliferation of hepatocytes in response to liver damage. Binding to its receptor formed by IL6ST and IL11RA activates a signaling cascade that promotes cell proliferation. Signaling leads to the activation of intracellular protein kinases and the phosphorylation of STAT3. The interaction with the membrane-bound IL11RA and IL6ST stimulates 'classic signaling', whereas the binding of IL11 and soluble IL11RA to IL6ST stimulates 'trans-signaling'. The sequence is that of Interleukin-11 from Homo sapiens (Human).